Reading from the N-terminus, the 174-residue chain is Larval cuticle protein A1A (174 aa).

2 tandem repeats follow at residues 45–48 (AAPV) and 67–70 (AAPV). Residues 84 to 150 (NPQYSFGYDV…AVVHREPLVA (67 aa)) enclose the Chitin-binding type R&amp;R domain. The stretch at 155–158 (AAPA) is repeat 3.

Its function is as follows. Component of the cuticle of the larva of Tenebrio molitor. This Tenebrio molitor (Yellow mealworm beetle) protein is Larval cuticle protein A1A.